A 144-amino-acid chain; its full sequence is Ribonuclease H (144 aa).

Positions 1-136 (MKIVTLFSDG…CDQMARNEAL (136 aa)) constitute an RNase H type-1 domain. Residues Asp-9, Glu-47, Asp-69, and Asp-128 each coordinate Mg(2+).

It belongs to the RNase H family. Monomer. It depends on Mg(2+) as a cofactor.

It is found in the cytoplasm. The enzyme catalyses Endonucleolytic cleavage to 5'-phosphomonoester.. In terms of biological role, endonuclease that specifically degrades the RNA of RNA-DNA hybrids. In Campylobacter concisus (strain 13826), this protein is Ribonuclease H.